The primary structure comprises 350 residues: Probable arabinogalactan endo-beta-1,4-galactanase A (350 aa).

The N-terminal stretch at 1-16 (MIYPLLLSALPLLSSA) is a signal peptide. Residue asparagine 128 is glycosylated (N-linked (GlcNAc...) asparagine). Catalysis depends on glutamate 152, which acts as the Proton donor. Catalysis depends on glutamate 262, which acts as the Nucleophile.

Belongs to the glycosyl hydrolase 53 family.

The protein localises to the secreted. The enzyme catalyses The enzyme specifically hydrolyzes (1-&gt;4)-beta-D-galactosidic linkages in type I arabinogalactans.. In terms of biological role, endogalactanase involved in the degradation of plant cell wall polysaccharides, and more particularly of hairy regions of pectin. This chain is Probable arabinogalactan endo-beta-1,4-galactanase A (galA), found in Aspergillus tubingensis.